Here is a 121-residue protein sequence, read N- to C-terminus: Natriuretic peptides B (121 aa).

Residues 1–26 (MDLLKVLSQMILFLLFLYLSPLGGHS) form the signal peptide. A disordered region spans residues 61–89 (LKDQGLTKEHPKRVLRSQGSTLRVQQRPQ). Residues 77–89 (SQGSTLRVQQRPQ) are compositionally biased toward polar residues. A disulfide bridge links cysteine 99 with cysteine 115.

This sequence belongs to the natriuretic peptide family. In terms of processing, the precursor molecule is proteolytically cleaved by the endoprotease Furin to produce brain natriuretic peptide 45. May undergo further proteolytic cleavage by various proteases such as DPP4, MME and possibly FAP, to give rise to a variety of shorter peptides. May be cleaved at Ser-91 by the prolyl endopeptidase FAP (seprase) activity (in vitro). May be degraded by IDE. During IDE degradation, the resulting products initially increase the activation of NPR1 and can also stimulate NPR2 to produce cGMP before the fragments are completely degraded and inactivated by IDE (in vitro). Expressed abundantly in the ventricle, and in a lesser extent in the atrium (at protein level).

It localises to the secreted. In terms of biological role, cardiac hormone that plays a key role in mediating cardio-renal homeostasis. May also function as a paracrine antifibrotic factor in the heart. Acts by specifically binding and stimulating NPR1 to produce cGMP, which in turn activates effector proteins that drive various biological responses. Likely involved in regulating the extracellular fluid volume and maintaining the fluid-electrolyte balance through natriuresis, diuresis, kaluresis and chloruresis. This is Natriuretic peptides B (Nppb) from Mus musculus (Mouse).